The sequence spans 363 residues: Small ribosomal subunit biogenesis GTPase RsgA (363 aa).

Residues 112 to 268 (HQQVIAANID…LIDTPGMREL (157 aa)) enclose the CP-type G domain. GTP is bound by residues 157 to 160 (TKAD) and 210 to 218 (GSSGAGKST). Zn(2+)-binding residues include cysteine 291, cysteine 296, histidine 298, and cysteine 304. The segment at 340–363 (RVAQNNRGKGSGKRPASIDRPGRR) is disordered.

It belongs to the TRAFAC class YlqF/YawG GTPase family. RsgA subfamily. As to quaternary structure, monomer. Associates with 30S ribosomal subunit, binds 16S rRNA. Requires Zn(2+) as cofactor.

It localises to the cytoplasm. Its function is as follows. One of several proteins that assist in the late maturation steps of the functional core of the 30S ribosomal subunit. Helps release RbfA from mature subunits. May play a role in the assembly of ribosomal proteins into the subunit. Circularly permuted GTPase that catalyzes slow GTP hydrolysis, GTPase activity is stimulated by the 30S ribosomal subunit. In Xanthomonas oryzae pv. oryzae (strain PXO99A), this protein is Small ribosomal subunit biogenesis GTPase RsgA.